Consider the following 594-residue polypeptide: Arginine--tRNA ligase (594 aa).

The 'HIGH' region signature appears at 139 to 149; it reads ANPTGPLHVGH.

This sequence belongs to the class-I aminoacyl-tRNA synthetase family. In terms of assembly, monomer.

It is found in the cytoplasm. The enzyme catalyses tRNA(Arg) + L-arginine + ATP = L-arginyl-tRNA(Arg) + AMP + diphosphate. The protein is Arginine--tRNA ligase of Burkholderia thailandensis (strain ATCC 700388 / DSM 13276 / CCUG 48851 / CIP 106301 / E264).